Here is a 385-residue protein sequence, read N- to C-terminus: Pectate lyase E (385 aa).

Residues M1–A30 form the signal peptide. Ca(2+) is bound at residue D164. The stretch at D177 to S182 is repeat 1. The 2 X 6 AA approximate repeats stretch occupies residues D177–S218. Residue D207 participates in Ca(2+) binding. The stretch at D213–S218 is repeat 2. R260 is a catalytic residue.

Belongs to the polysaccharide lyase 1 family. PLBC subfamily. Ca(2+) serves as cofactor.

The protein localises to the secreted. The enzyme catalyses Eliminative cleavage of (1-&gt;4)-alpha-D-galacturonan to give oligosaccharides with 4-deoxy-alpha-D-galact-4-enuronosyl groups at their non-reducing ends.. Its pathway is glycan metabolism; pectin degradation; 2-dehydro-3-deoxy-D-gluconate from pectin: step 2/5. Its function is as follows. Involved in maceration and soft-rotting of plant tissue. The chain is Pectate lyase E (pelE) from Dickeya chrysanthemi (Pectobacterium chrysanthemi).